Reading from the N-terminus, the 352-residue chain is Rhodopsin (352 aa).

The Extracellular segment spans residues 1–36; that stretch reads MNGTEGPDFYIPFSNKTGVVRSPFEYPQYYLAEPWK. Residues asparagine 2 and asparagine 15 are each glycosylated (N-linked (GlcNAc...) asparagine). A helical transmembrane segment spans residues 37–61; that stretch reads YSALAAYMFMLIILGFPINFLTLYV. Over 62-73 the chain is Cytoplasmic; sequence TVQHKKLRSPLN. The helical transmembrane segment at 74 to 96 threads the bilayer; it reads YILLNLAVADLFMVLGGFTTTLY. Residues 97-110 are Extracellular-facing; sequence TSMNGYFVFGVTGC. A disulfide bridge links cysteine 110 with cysteine 187. Residues 111-133 traverse the membrane as a helical segment; sequence YFEGFFATLGGEVALWCLVVLAI. The short motif at 134–136 is the 'Ionic lock' involved in activated form stabilization element; it reads ERY. Over 134–152 the chain is Cytoplasmic; sequence ERYIVVCKPMSNFRFGENH. A helical membrane pass occupies residues 153 to 173; it reads AIMGVVFTWIMALTCAAPPLV. Topologically, residues 174–202 are extracellular; that stretch reads GWSRYIPEGMQCSCGVDYYTLKPEVNNES. The chain crosses the membrane as a helical span at residues 203–224; it reads FVIYMFVVHFAIPLAVIFFCYG. Topologically, residues 225–252 are cytoplasmic; it reads RLVCTVKEAAAQQQESATTQKAEKEVTR. A helical transmembrane segment spans residues 253–274; it reads MVIIMVVSFLICWVPYASVAFY. The Extracellular portion of the chain corresponds to 275-286; it reads IFSNQGSDFGPV. Residues 287 to 308 form a helical membrane-spanning segment; the sequence is FMTIPAFFAKSSAIYNPVIYIV. Lysine 296 is subject to N6-(retinylidene)lysine. The Cytoplasmic portion of the chain corresponds to 309–352; it reads MNKQFRNCMITTLCCGKNPLGDDETATGSKTETSSVSTSQVSPA. Residues cysteine 322 and cysteine 323 are each lipidated (S-palmitoyl cysteine). The segment at 332–352 is disordered; that stretch reads ETATGSKTETSSVSTSQVSPA. The segment covering 335–352 has biased composition (low complexity); the sequence is TGSKTETSSVSTSQVSPA.

This sequence belongs to the G-protein coupled receptor 1 family. Opsin subfamily. Contains one covalently linked retinal chromophore. Upon light absorption, the covalently bound 11-cis-retinal is converted to all-trans-retinal. After hydrolysis of the Schiff base and release of the covalently bound all-trans-retinal, active rhodopsin is regenerated by binding of a fresh molecule of 11-cis-retinal. Expressed in rod-shaped photoreceptor cells in the retina that mediate vision in dim ligh (at protein level).

It is found in the membrane. The protein localises to the cell projection. It localises to the cilium. Its subcellular location is the photoreceptor outer segment. Photoreceptor required for image-forming vision at low light intensity. Required for photoreceptor cell viability after birth. Light-induced isomerization of 11-cis to all-trans retinal triggers a conformational change that activates signaling via G-proteins. Subsequent receptor phosphorylation mediates displacement of the bound G-protein alpha subunit by arrestin and terminates signaling. In Alligator mississippiensis (American alligator), this protein is Rhodopsin (RHO).